A 163-amino-acid chain; its full sequence is SsrA-binding protein (163 aa).

Over residues 138–157 (EDRRGAIAERESKREMDRAL) the composition is skewed to basic and acidic residues. The disordered stretch occupies residues 138 to 163 (EDRRGAIAERESKREMDRALARGRRR).

This sequence belongs to the SmpB family.

The protein resides in the cytoplasm. Its function is as follows. Required for rescue of stalled ribosomes mediated by trans-translation. Binds to transfer-messenger RNA (tmRNA), required for stable association of tmRNA with ribosomes. tmRNA and SmpB together mimic tRNA shape, replacing the anticodon stem-loop with SmpB. tmRNA is encoded by the ssrA gene; the 2 termini fold to resemble tRNA(Ala) and it encodes a 'tag peptide', a short internal open reading frame. During trans-translation Ala-aminoacylated tmRNA acts like a tRNA, entering the A-site of stalled ribosomes, displacing the stalled mRNA. The ribosome then switches to translate the ORF on the tmRNA; the nascent peptide is terminated with the 'tag peptide' encoded by the tmRNA and targeted for degradation. The ribosome is freed to recommence translation, which seems to be the essential function of trans-translation. The chain is SsrA-binding protein from Anaeromyxobacter dehalogenans (strain 2CP-1 / ATCC BAA-258).